A 247-amino-acid polypeptide reads, in one-letter code: Type III pantothenate kinase (247 aa).

6–13 (DVGNTHTT) is a binding site for ATP. Position 101 to 104 (101 to 104 (GADR)) interacts with substrate. Asp-103 acts as the Proton acceptor in catalysis. Asp-123 contacts K(+). Thr-126 contributes to the ATP binding site. Residue Thr-177 participates in substrate binding.

This sequence belongs to the type III pantothenate kinase family. In terms of assembly, homodimer. It depends on NH4(+) as a cofactor. The cofactor is K(+).

The protein resides in the cytoplasm. The enzyme catalyses (R)-pantothenate + ATP = (R)-4'-phosphopantothenate + ADP + H(+). It functions in the pathway cofactor biosynthesis; coenzyme A biosynthesis; CoA from (R)-pantothenate: step 1/5. Its function is as follows. Catalyzes the phosphorylation of pantothenate (Pan), the first step in CoA biosynthesis. The polypeptide is Type III pantothenate kinase (Thermosipho melanesiensis (strain DSM 12029 / CIP 104789 / BI429)).